The following is a 130-amino-acid chain: Large ribosomal subunit protein bL20c (130 aa).

Belongs to the bacterial ribosomal protein bL20 family.

The protein resides in the plastid. It is found in the chloroplast. Binds directly to 23S ribosomal RNA and is necessary for the in vitro assembly process of the 50S ribosomal subunit. It is not involved in the protein synthesizing functions of that subunit. This Fagopyrum esculentum subsp. ancestrale (Wild buckwheat) protein is Large ribosomal subunit protein bL20c.